Consider the following 320-residue polypeptide: Zygote arrest protein 1 (320 aa).

Disordered regions lie at residues Glu106–Tyr130 and Asp155–Ser208. A 3CxxC-type zinc finger spans residues Lys222–Gly305.

The protein belongs to the ZAR1 family.

The protein localises to the cytoplasm. It is found in the cytoplasmic ribonucleoprotein granule. MRNA-binding protein required for maternal mRNA storage, translation and degradation during oocyte maturation. Probably promotes formation of some phase-separated membraneless compartment that stores maternal mRNAs in oocytes: acts by undergoing liquid-liquid phase separation upon binding to maternal mRNAs. Binds to the 3'-UTR of maternal mRNAs, inhibiting their translation. The sequence is that of Zygote arrest protein 1 from Takifugu rubripes (Japanese pufferfish).